A 265-amino-acid polypeptide reads, in one-letter code: Phosphate import ATP-binding protein PstB (265 aa).

Residues 11–260 (VSADEVKIAA…PRDPRTESYI (250 aa)) enclose the ABC transporter domain. 50 to 57 (GPSGCGKS) lines the ATP pocket.

Belongs to the ABC transporter superfamily. Phosphate importer (TC 3.A.1.7) family. As to quaternary structure, the complex is composed of two ATP-binding proteins (PstB), two transmembrane proteins (PstC and PstA) and a solute-binding protein (PstS).

It is found in the cell inner membrane. It catalyses the reaction phosphate(out) + ATP + H2O = ADP + 2 phosphate(in) + H(+). In terms of biological role, part of the ABC transporter complex PstSACB involved in phosphate import. Responsible for energy coupling to the transport system. The sequence is that of Phosphate import ATP-binding protein PstB from Cereibacter sphaeroides (strain ATCC 17023 / DSM 158 / JCM 6121 / CCUG 31486 / LMG 2827 / NBRC 12203 / NCIMB 8253 / ATH 2.4.1.) (Rhodobacter sphaeroides).